The primary structure comprises 730 residues: MKTKTSIFQFIVASVLTLLINDSSAATPPPPISNSSTSCNKTCGGISIPFPFGIGGKDCYLNGWYEVICNTTTSDSNTTVPLLSMINREVVNISLPDSNEPYGLVQIKGPVTSLGCSSNTSEGPQNSLPVLNVTGKGSPYFLTDENRLVAVGCGIKALMTDTESEILGCESSCEHRKSGEEVTNLICTGYRCCQARLPVGRPQAITVNIENSSGGEETCKVAFLTDKRYSPSNVTEPEQFHNNGYVVLELGWYFATSNSRFKSLLGCTNMSRKGSGFSDDNCSCEYDYFSGMSYRNCYCDYGYTGNPYLRGGCVDTDSCEGNHNCGEDAHCVNMPGPMSMCRPNPKITKPTKPPVLQGILIGLSGLVFFVGLFWLFKLIKKRRNINRSKKFFKRNGGLLLKQQLTTKDGNVEMSKIFSSKELRKATDNFSIDRVLGQGGQGTVYKGMLVDGSIVAVKRSKVVDEDKMEEFINEIVLLSQINHRNIVKLLGCCLETEVPILVYEYIPNGDLFKRLHDESDDYTMTWEVRLRIAIEIAGALTYMHSAASFPIFHRDIKTTNILLDEKYRAKVSDFGTSRSVTLDQTHLTTLVAGTFGYMDPEYFLSSQYTHKSDVYSFGVVLVELITGEKPLSRVRSEEGRGLATHFLEAMKENRVIDIIDIRIKDESKLEQVMAVAKLARKCLNRKGKNRPNMKEVSNELERIRSSPEDLDVRTENEDEEEDQPMAINNKR.

The signal sequence occupies residues 1 to 25 (MKTKTSIFQFIVASVLTLLINDSSA). At 26-358 (ATPPPPISNS…KPTKPPVLQG (333 aa)) the chain is on the extracellular side. N-linked (GlcNAc...) asparagine glycans are attached at residues N34, N40, N70, N77, N92, N119, N132, N211, N233, N269, and N281. The atypical EGF-like stretch occupies residues 282 to 341 (CSCEYDYFSGMSYRNCYCDYGYTGNPYLRGGCVDTDSCEGNHNCGEDAHCVNMPGPMSMC). 3 disulfides stabilise this stretch: C284–C297, C319–C331, and C325–C341. A helical membrane pass occupies residues 359 to 379 (ILIGLSGLVFFVGLFWLFKLI). The Cytoplasmic segment spans residues 380–730 (KKRRNINRSK…DQPMAINNKR (351 aa)). Residues 429–702 (FSIDRVLGQG…KEVSNELERI (274 aa)) enclose the Protein kinase domain. ATP contacts are provided by residues 435-443 (LGQGGQGTV) and K457. At Y502 the chain carries Phosphotyrosine. The active-site Proton acceptor is D554. 2 positions are modified to phosphothreonine: T588 and T593. A Phosphotyrosine modification is found at Y601. Residues 685–730 (KGKNRPNMKEVSNELERIRSSPEDLDVRTENEDEEEDQPMAINNKR) are disordered. Positions 691–714 (NMKEVSNELERIRSSPEDLDVRTE) are enriched in basic and acidic residues.

The protein belongs to the protein kinase superfamily. Ser/Thr protein kinase family. As to expression, preferentially expressed in roots and flowers.

The protein resides in the membrane. It carries out the reaction L-seryl-[protein] + ATP = O-phospho-L-seryl-[protein] + ADP + H(+). The enzyme catalyses L-threonyl-[protein] + ATP = O-phospho-L-threonyl-[protein] + ADP + H(+). In terms of biological role, serine/threonine-protein kinase that may function as a signaling receptor of extracellular matrix component. This chain is Wall-associated receptor kinase-like 1 (WAKL1), found in Arabidopsis thaliana (Mouse-ear cress).